The chain runs to 211 residues: ATP phosphoribosyltransferase (211 aa).

The protein belongs to the ATP phosphoribosyltransferase family. Short subfamily. As to quaternary structure, heteromultimer composed of HisG and HisZ subunits.

Its subcellular location is the cytoplasm. It carries out the reaction 1-(5-phospho-beta-D-ribosyl)-ATP + diphosphate = 5-phospho-alpha-D-ribose 1-diphosphate + ATP. The protein operates within amino-acid biosynthesis; L-histidine biosynthesis; L-histidine from 5-phospho-alpha-D-ribose 1-diphosphate: step 1/9. Its function is as follows. Catalyzes the condensation of ATP and 5-phosphoribose 1-diphosphate to form N'-(5'-phosphoribosyl)-ATP (PR-ATP). Has a crucial role in the pathway because the rate of histidine biosynthesis seems to be controlled primarily by regulation of HisG enzymatic activity. The polypeptide is ATP phosphoribosyltransferase (Pseudomonas putida (strain ATCC 47054 / DSM 6125 / CFBP 8728 / NCIMB 11950 / KT2440)).